Reading from the N-terminus, the 597-residue chain is uncharacterized protein (597 aa).

Over residues 1–23 (MSHEGSRQARDRGVTRSKAEKAR) the composition is skewed to basic and acidic residues. Disordered regions lie at residues 1–32 (MSHE…VPQV) and 171–192 (RESQ…NPRP). A compositionally biased stretch (low complexity) spans 175–186 (EPTQSSEPSAEP). 2 positions are modified to phosphoserine: S237 and S241. 2 disordered regions span residues 302-335 (SLLS…MRLD) and 549-569 (EAEE…GVSK). Residues 557–568 (APEQQPIQTGVS) are compositionally biased toward polar residues.

This is an uncharacterized protein from Rattus norvegicus (Rat).